The primary structure comprises 1180 residues: RecBCD enzyme subunit RecB (1180 aa).

The region spanning serine 2–alanine 450 is the UvrD-like helicase ATP-binding domain. The ATPase, DNA-binding and helicase activity, interacts with RecC stretch occupies residues serine 2–leucine 853. Alanine 23–threonine 30 serves as a coordination point for ATP. The DNA-binding element occupies isoleucine 252 to arginine 254. Tryptophan 447 serves as a coordination point for ATP. One can recognise a UvrD-like helicase C-terminal domain in the interval serine 480–glycine 746. DNA-binding regions lie at residues valine 511 to glycine 512, serine 560 to arginine 561, and arginine 761. Positions asparagine 900 to alanine 1180 are nuclease activity, interacts with RecD and RecA. Residues histidine 956, aspartate 1067, aspartate 1080, and tyrosine 1081 each coordinate Mg(2+). Residue aspartate 1080 is the For nuclease activity of the active site.

This sequence belongs to the helicase family. UvrD subfamily. Heterotrimer of RecB, RecC and RecD. All subunits contribute to DNA-binding. The C-terminus interacts with RecA. Interacts with YgbT (Cas1). In terms of assembly, (Microbial infection) Lambda virus GamS protein interacts with the enzyme without displacing any of the subunits. Mg(2+) is required as a cofactor.

It carries out the reaction Exonucleolytic cleavage (in the presence of ATP) in either 5'- to 3'- or 3'- to 5'-direction to yield 5'-phosphooligonucleotides.. The catalysed reaction is Couples ATP hydrolysis with the unwinding of duplex DNA by translocating in the 3'-5' direction.. It catalyses the reaction ATP + H2O = ADP + phosphate + H(+). After reacting with DNA bearing a Chi site the holoenzyme is disassembled and loses exonuclease activity, DNA unwinding and Chi-directed DNA cleavage; RecB remains complexed with ssDNA, which may prevent holoenzyme reassembly. High levels of Mg(2+) (13 mM MgCl(2+)) or incubation with DNase allows holoenzyme reassembly, suggesting it is DNA bound to RecB that prevents reassembly. Its activity is regulated as follows. (Microbial infection) RecBCD is inhibited by the lambda virus gam protein (both GamL and GamS isoforms); in vitro a short preincubation prior to adding DNA results in maximal inhibition. In terms of biological role, a helicase/nuclease that prepares dsDNA breaks (DSB) for recombinational DNA repair. Binds to DSBs and unwinds DNA via a rapid (&gt;1 kb/second) and highly processive (&gt;30 kb) ATP-dependent bidirectional helicase. Unwinds dsDNA until it encounters a Chi (crossover hotspot instigator, 5'-GCTGGTGG-3') sequence from the 3' direction. Cuts ssDNA a few nucleotides 3' to Chi site, by nicking one strand or switching the strand degraded (depending on the reaction conditions). The properties and activities of the enzyme are changed at Chi. The Chi-altered holoenzyme produces a long 3'-ssDNA overhang which facilitates RecA-binding to the ssDNA for homologous DNA recombination and repair. Holoenzyme degrades any linearized DNA that is unable to undergo homologous recombination. In the holoenzyme this subunit contributes ATPase, 3'-5' helicase, exonuclease activity and loads RecA onto ssDNA. The RecBC complex requires the RecD subunit for nuclease activity, but can translocate along ssDNA in both directions. The RecBCD complex does not unwind G-quadruplex DNA. Probably interacts with a component of retron Ec48 which moniters RecBCD stability; when RecB is missing or impaired the retron is activated and becomes toxic. The chain is RecBCD enzyme subunit RecB from Escherichia coli (strain K12).